Here is a 315-residue protein sequence, read N- to C-terminus: Ankyrin repeat domain-containing protein EMB506, chloroplastic (315 aa).

The N-terminal 39 residues, 1-39, are a transit peptide targeting the chloroplast; that stretch reads MVSSVLSIPPQTCLLPRLPISDSVNCKSKIVYCLSTSVR. The span at 44–65 shows a compositional bias: polar residues; sequence KRQSTARTRSFTETNRRTPSVQ. The segment at 44–106 is disordered; that stretch reads KRQSTARTRS…DNESDWEDDS (63 aa). Residues 72–104 are compositionally biased toward acidic residues; it reads EDPDDGSDSENEYEGEEEDGIGNDLDNESDWED. 5 ANK repeats span residues 151–180, 184–213, 217–246, 250–279, and 283–307; these read KSWKPLQTLALSMQIQLMDNLIENGLDIDD, DNQTALHKAIIGKKEAVISHLLRKGANPHL, DGAAPIHYAVQVGALQTVKLLFKYNVDVNV, EGWTPLHIAVQSRNRDITKILLTNGADKTR, and DGKLALDLALCFGRDFKSYDLVKLL.

As to quaternary structure, interacts with AKR. No homodimerization observed. In terms of tissue distribution, expressed in roots, inflorescence stems, flowers, siliques, dry seeds and mature cauline leaves.

The protein localises to the plastid. The protein resides in the chloroplast. Its function is as follows. Involved in the initial differentiation of the proplastid during the embryo development. Also required for correct cotyledon, true leaf and cauline leaf margin development. The sequence is that of Ankyrin repeat domain-containing protein EMB506, chloroplastic (EMB506) from Arabidopsis thaliana (Mouse-ear cress).